Here is a 445-residue protein sequence, read N- to C-terminus: Chromosomal replication initiator protein DnaA (445 aa).

Residues 1–71 (MEEVWLQAQS…SVQSLTDSQT (71 aa)) form a domain I, interacts with DnaA modulators region. The domain II stretch occupies residues 71-108 (TKIELLIAKPKTEKPKQPAASEVTAAEPEACSGPDHST). Residues 83 to 106 (EKPKQPAASEVTAAEPEACSGPDH) form a disordered region. The domain III, AAA+ region stretch occupies residues 109–325 (NLNPKYTFDT…GMLIRLGAVS (217 aa)). Residues Gly-153, Gly-155, Lys-156, and Thr-157 each coordinate ATP. Residues 326–445 (SLTGKNITLD…VDTLRKGLLS (120 aa)) form a domain IV, binds dsDNA region.

It belongs to the DnaA family. As to quaternary structure, oligomerizes as a right-handed, spiral filament on DNA at oriC.

Its subcellular location is the cytoplasm. In terms of biological role, plays an essential role in the initiation and regulation of chromosomal replication. ATP-DnaA binds to the origin of replication (oriC) to initiate formation of the DNA replication initiation complex once per cell cycle. Binds the DnaA box (a 9 base pair repeat at the origin) and separates the double-stranded (ds)DNA. Forms a right-handed helical filament on oriC DNA; dsDNA binds to the exterior of the filament while single-stranded (ss)DNA is stabiized in the filament's interior. The ATP-DnaA-oriC complex binds and stabilizes one strand of the AT-rich DNA unwinding element (DUE), permitting loading of DNA polymerase. After initiation quickly degrades to an ADP-DnaA complex that is not apt for DNA replication. Binds acidic phospholipids. This is Chromosomal replication initiator protein DnaA from Geobacter sulfurreducens (strain ATCC 51573 / DSM 12127 / PCA).